The following is a 276-amino-acid chain: Large ribosomal subunit protein uL2 (276 aa).

The tract at residues 210 to 276 (GRNRHRGIRP…KLIISRRKGK (67 aa)) is disordered. Positions 230–240 (DHPHGGGEGKK) are enriched in basic and acidic residues. Over residues 255–276 (KGAKTRRKKASDKLIISRRKGK) the composition is skewed to basic residues.

The protein belongs to the universal ribosomal protein uL2 family. In terms of assembly, part of the 50S ribosomal subunit. Forms a bridge to the 30S subunit in the 70S ribosome.

Functionally, one of the primary rRNA binding proteins. Required for association of the 30S and 50S subunits to form the 70S ribosome, for tRNA binding and peptide bond formation. It has been suggested to have peptidyltransferase activity; this is somewhat controversial. Makes several contacts with the 16S rRNA in the 70S ribosome. The chain is Large ribosomal subunit protein uL2 from Campylobacter jejuni subsp. jejuni serotype O:6 (strain 81116 / NCTC 11828).